We begin with the raw amino-acid sequence, 377 residues long: N5-carboxyaminoimidazole ribonucleotide synthase (377 aa).

ATP contacts are provided by residues Arg93, Lys133, 138–144, 175–178, Glu183, His206, and 257–258; these read GYDGKGQ, EEFV, and NE. The 191-residue stretch at 97 to 287 folds into the ATP-grasp domain; that stretch reads KALLDNAGVR…QFENHLRAVC (191 aa).

Belongs to the PurK/PurT family. As to quaternary structure, homodimer.

The catalysed reaction is 5-amino-1-(5-phospho-beta-D-ribosyl)imidazole + hydrogencarbonate + ATP = 5-carboxyamino-1-(5-phospho-D-ribosyl)imidazole + ADP + phosphate + 2 H(+). It functions in the pathway purine metabolism; IMP biosynthesis via de novo pathway; 5-amino-1-(5-phospho-D-ribosyl)imidazole-4-carboxylate from 5-amino-1-(5-phospho-D-ribosyl)imidazole (N5-CAIR route): step 1/2. In terms of biological role, catalyzes the ATP-dependent conversion of 5-aminoimidazole ribonucleotide (AIR) and HCO(3)(-) to N5-carboxyaminoimidazole ribonucleotide (N5-CAIR). The chain is N5-carboxyaminoimidazole ribonucleotide synthase from Vibrio parahaemolyticus serotype O3:K6 (strain RIMD 2210633).